The primary structure comprises 193 residues: Acyl carrier protein phosphodiesterase (193 aa).

This sequence belongs to the AcpH family.

The catalysed reaction is holo-[ACP] + H2O = apo-[ACP] + (R)-4'-phosphopantetheine + H(+). Converts holo-ACP to apo-ACP by hydrolytic cleavage of the phosphopantetheine prosthetic group from ACP. In Escherichia coli O139:H28 (strain E24377A / ETEC), this protein is Acyl carrier protein phosphodiesterase.